A 102-amino-acid chain; its full sequence is YcgL domain-containing protein MS1047 (102 aa).

The 85-residue stretch at 1–85 (MLCAIYKSKK…KQESLFEQFK (85 aa)) folds into the YcgL domain.

This chain is YcgL domain-containing protein MS1047, found in Mannheimia succiniciproducens (strain KCTC 0769BP / MBEL55E).